Here is a 372-residue protein sequence, read N- to C-terminus: L-selectin (372 aa).

An N-terminal signal peptide occupies residues 1 to 28 (MIFPWKCQSTQRDLWNIFKLWGWTMLCC). Positions 29–38 (DFLAHHGTDC) are excised as a propeptide. The Extracellular segment spans residues 39–332 (WTYHYSEKPM…FSMIKEGDYN (294 aa)). In terms of domain architecture, C-type lectin spans 55 to 155 (RFCRDNYTDL…ACHKLKAALC (101 aa)). Intrachain disulfides connect Cys57–Cys155, Cys128–Cys147, Cys128–Cys160, Cys160–Cys171, Cys165–Cys180, Cys182–Cys191, Cys197–Cys241, Cys227–Cys254, Cys259–Cys303, and Cys289–Cys316. Asn60 and Asn104 each carry an N-linked (GlcNAc...) asparagine glycan. Glu118, Asn120, Glu126, Asn143, and Asp144 together coordinate Ca(2+). Residues 156–192 (YTASCQPWSCSGHGECVEIINNYTCNCDVGYYGPQCQ) form the EGF-like domain. N-linked (GlcNAc...) asparagine glycosylation is present at Asn177. Sushi domains lie at 195–256 (IQCE…TCQV) and 257–318 (IQCE…ICQK). Asn216, Asn232, Asn246, and Asn271 each carry an N-linked (GlcNAc...) asparagine glycan. A helical transmembrane segment spans residues 333-355 (PLFIPVAVMVTAFSGLAFIIWLA). Topologically, residues 356–372 (RRLKKGKKSKRSMDDPY) are cytoplasmic.

It belongs to the selectin/LECAM family. Interaction with SELPLG/PSGL1 and PODXL2 is required for promoting recruitment and rolling of leukocytes. This interaction is dependent on the sialyl Lewis X glycan modification of SELPLG and PODXL2, and tyrosine sulfation modifications of SELPLG. Sulfation on 'Tyr-51' of SELPLG is important for L-selectin binding. N-glycosylated.

The protein localises to the cell membrane. In terms of biological role, calcium-dependent lectin that mediates cell adhesion by binding to glycoproteins on neighboring cells. Mediates the adherence of lymphocytes to endothelial cells of high endothelial venules in peripheral lymph nodes. Promotes initial tethering and rolling of leukocytes in endothelia. This Pan troglodytes (Chimpanzee) protein is L-selectin (SELL).